The sequence spans 187 residues: UPF0301 protein VF_0434 (187 aa).

It belongs to the UPF0301 (AlgH) family.

In Aliivibrio fischeri (strain ATCC 700601 / ES114) (Vibrio fischeri), this protein is UPF0301 protein VF_0434.